A 416-amino-acid chain; its full sequence is MKQLKMVLIVGDGMGDRLVPSLGNKTPLEVASTPNLDEAARRGQAGLMDVIAPGVPPGSDTAHLALFGLDPFEWYEGRGPFEALGVGAEVGPGDVALRGNFATVEERGGRLVVVDRRAGRYLPEAEELVKALNEELSEVEGVKVRFYHATEHRVAVVLKGEGLSDEVSDTDPHEVGKPVQEARPLRDTPEAKKTARVINEITFRSYQILKDHPANKRRVEKGLPPANIVLLRGAGMMRKKLPTLQERYGIKAAAVGATALVLGVARAVGMDVIVPPGATGGVNTDYKSKARTAVELLKDYDMVFVHIKGTDAASHDGDVENKIKMIEALDYVLGYLLDYYDGEAVFAVTPDHATPVTVKEHTGDPVPVLLYAPTLIPDEAVEYNERAVRKGILRIRGRDLINLMLNYSNRAKKFGA.

It belongs to the BPG-independent phosphoglycerate mutase family. A-PGAM subfamily.

It carries out the reaction (2R)-2-phosphoglycerate = (2R)-3-phosphoglycerate. The protein operates within carbohydrate degradation; glycolysis; pyruvate from D-glyceraldehyde 3-phosphate: step 3/5. Functionally, catalyzes the interconversion of 2-phosphoglycerate and 3-phosphoglycerate. The protein is 2,3-bisphosphoglycerate-independent phosphoglycerate mutase of Ignicoccus hospitalis (strain KIN4/I / DSM 18386 / JCM 14125).